We begin with the raw amino-acid sequence, 446 residues long: Transcription factor SOX-8 (446 aa).

Disordered stretches follow at residues 1 to 58 (MLDM…DPAE), 155 to 259 (AERL…RQNI), and 318 to 378 (HKSA…PFAG). Residues 40–53 (EGLGRAGVAVGGAR) are compositionally biased toward gly residues. The tract at residues 58-100 (EAADERFPACIRDAVSQVLKGYDWSLVPMPVRGGGGGALKAKP) is dimerization (DIM). Residues 102-170 (VKRPMNAFMV…QHKKDHPDYK (69 aa)) constitute a DNA-binding region (HMG box). Composition is skewed to basic and acidic residues over residues 155-171 (AERL…DYKY), 210-219 (DGHHHGDHTG), and 242-253 (PELKLEGRRPVD). Positions 224–298 (PPTPPTTPKT…LPLGGPAPPE (75 aa)) are transactivation domain (TAM). The transactivation domain (TAC) stretch occupies residues 335 to 446 (RPHIKTEQPS…QPVYTTLTRP (112 aa)). Positions 362–378 (SGQSSATPAAPAGPFAG) are enriched in low complexity. Residues 400–408 (PGLYQYPCF) carry the 9aaTAD motif. The segment at 425–446 (LPPAHSPTSHWDQPVYTTLTRP) is disordered. Residues 430 to 446 (SPTSHWDQPVYTTLTRP) show a composition bias toward polar residues.

The protein resides in the nucleus. In terms of biological role, transcription factor that may play a role in central nervous system, limb and facial development. May be involved in male sex determination. Binds the consensus motif 5'-[AT][AT]CAA[AT]G-3'. In Homo sapiens (Human), this protein is Transcription factor SOX-8.